The chain runs to 318 residues: Biotin synthase (318 aa).

A Radical SAM core domain is found at 40-260 (DDIQKASLLS…VATARIIMPL (221 aa)). The [4Fe-4S] cluster site is built by cysteine 55, cysteine 59, and cysteine 62. Positions 100, 132, 192, and 264 each coordinate [2Fe-2S] cluster.

It belongs to the radical SAM superfamily. Biotin synthase family. Homodimer. Requires [4Fe-4S] cluster as cofactor. The cofactor is [2Fe-2S] cluster.

The enzyme catalyses (4R,5S)-dethiobiotin + (sulfur carrier)-SH + 2 reduced [2Fe-2S]-[ferredoxin] + 2 S-adenosyl-L-methionine = (sulfur carrier)-H + biotin + 2 5'-deoxyadenosine + 2 L-methionine + 2 oxidized [2Fe-2S]-[ferredoxin]. It participates in cofactor biosynthesis; biotin biosynthesis; biotin from 7,8-diaminononanoate: step 2/2. Its function is as follows. Catalyzes the conversion of dethiobiotin (DTB) to biotin by the insertion of a sulfur atom into dethiobiotin via a radical-based mechanism. The chain is Biotin synthase from Ruegeria pomeroyi (strain ATCC 700808 / DSM 15171 / DSS-3) (Silicibacter pomeroyi).